We begin with the raw amino-acid sequence, 335 residues long: MTLPLLGPMSLSGFEHSWFFLFIFIVFGLAAFYVMMQVARQRRMLRFANMELLESVAPNRPVQWRHVPAILLMLALLLFTIAMAGPTNDVRIPRNRAVVMLVIDVSQSMRATDVEPNRMAAAQEAAKQFAGELTPGINLGLIAYAGTATVLVSPTTNRYATKNALDKLQFADRTATGEAIFTALQAIATVGAVIGGGEMPPPARIVLFSDGKETMPTNPDNPKGAYTAARTAKDQGVPISTISFGTVYGFVEINGQRQPVPVDDETMKKVAQLSGGNSYNAATLAELKAVYASLQQQIGYETIKGDASAGWLRLGVLVLALAALTALLINRRLPT.

2 helical membrane passes run 18–38 (WFFL…MMQV) and 67–87 (VPAI…AGPT). The region spanning 98–294 (VVMLVIDVSQ…AELKAVYASL (197 aa)) is the VWFA domain. A helical transmembrane segment spans residues 309 to 329 (AGWLRLGVLVLALAALTALLI).

It belongs to the UPF0353 family.

The protein resides in the cell membrane. This Mycobacterium leprae (strain Br4923) protein is UPF0353 protein MLBr01808.